The chain runs to 121 residues: Apoptin (121 aa).

2 disordered regions span residues 1–28 (MNAHQEDTPPGPSTVFRPPTSSRPLETP) and 57–95 (LRSATADNSENTGFKNVPDLRTDQPKPPSKKRSCDPSEY). The segment covering 58–70 (RSATADNSENTGF) has biased composition (polar residues).

The protein belongs to the gyrovirus apoptin family.

The protein localises to the host nucleus. In terms of biological role, may act as transcriptional regulator. Induces apoptosis in infected cells. Element of infectious replication cycle. This chain is Apoptin (VP3), found in Gallus gallus (Chicken).